Consider the following 209-residue polypeptide: Na(+)-translocating NADH-quinone reductase subunit D (209 aa).

5 helical membrane passes run 42-62 (VVMTIAVTLVTAFSSFFISLI), 66-86 (IPNSVRIIVQMAIIASLVIVV), 95-115 (FEISKQLSVFVGLIITNCIVM), 131-151 (FMDGIGNGLGYGVILVLVGFL), and 178-198 (NGLFLLAPSAFFIIGLLIWAL).

Belongs to the NqrDE/RnfAE family. As to quaternary structure, composed of six subunits; NqrA, NqrB, NqrC, NqrD, NqrE and NqrF.

It localises to the cell inner membrane. It catalyses the reaction a ubiquinone + n Na(+)(in) + NADH + H(+) = a ubiquinol + n Na(+)(out) + NAD(+). Its function is as follows. NQR complex catalyzes the reduction of ubiquinone-1 to ubiquinol by two successive reactions, coupled with the transport of Na(+) ions from the cytoplasm to the periplasm. NqrA to NqrE are probably involved in the second step, the conversion of ubisemiquinone to ubiquinol. The protein is Na(+)-translocating NADH-quinone reductase subunit D of Serratia proteamaculans (strain 568).